We begin with the raw amino-acid sequence, 128 residues long: Fluoride-specific ion channel FluC 1 (128 aa).

A run of 4 helical transmembrane segments spans residues 10–30, 32–52, 59–79, and 93–113; these read VAFF…AFSF, GTVI…YFFL, AWLT…FSSF, and FGAL…AWAG. 2 residues coordinate Na(+): G71 and T74.

The protein belongs to the fluoride channel Fluc/FEX (TC 1.A.43) family.

The protein resides in the cell membrane. It carries out the reaction fluoride(in) = fluoride(out). With respect to regulation, na(+) is not transported, but it plays an essential structural role and its presence is essential for fluoride channel function. In terms of biological role, fluoride-specific ion channel. Important for reducing fluoride concentration in the cell, thus reducing its toxicity. This chain is Fluoride-specific ion channel FluC 1, found in Lactobacillus delbrueckii subsp. bulgaricus (strain ATCC 11842 / DSM 20081 / BCRC 10696 / JCM 1002 / NBRC 13953 / NCIMB 11778 / NCTC 12712 / WDCM 00102 / Lb 14).